Reading from the N-terminus, the 786-residue chain is MAMWIQAQQLQGDALHQMQALYGQHFPIEVRHYLSQWIESQAWDSIDLDNPQENIKATQLLEGLVQELQKKAEHQVGEDGFLLKIKLGHYATQLQSTYDRCPMELVRCIRHILYNEQRLVREANNGSSPAGSLADAMSQKHLQINQTFEELRLITQDTENELKKLQQTQEYFIIQYQESLRIQAQFAQLGQLNPQERMSRETALQQKQVSLETWLQREAQTLQQYRVELAEKHQKTLQLLRKQQTIILDDELIQWKRRQQLAGNGGPPEGSLDVLQSWCEKLAEIIWQNRQQIRRAEHLCQQLPIPGPVEEMLAEVNATITDIISALVTSTFIIEKQPPQVLKTQTKFAATVRLLVGGKLNVHMNPPQVKATIISEQQAKSLLKNENTRNDYSGEILNNCCVMEYHQATGTLSAHFRNMSLKRIKRSDRRGAESVTEEKFTILFDSQFSVGGNELVFQVKTLSLPVVVIVHGSQDNNATATVLWDNAFAEPGRVPFAVPDKVLWPQLCEALNMKFKAEVQSNRGLTKENLVFLAQKLFNISSNHLEDYNSMSVSWSQFNRENLPGRNYTFWQWFDGVMEVLKKHLKPHWNDGAILGFVNKQQAHDLLINKPDGTFLLRFSDSEIGGITIAWKFDSQERMFWNLMPFTTRDFSIRSLADRLGDLNYLIYVFPDRPKDEVYSKYYTPVPCEPATAKAADGYVKPQIKQVVPEFANASTDAGSGATYMDQAPSPVVCPQAHYNMYPPNPDSVLDTDGDFDLEDTMDVARRVEELLGRPMDSQWIPHAQS.

At tyrosine 90 the chain carries Phosphotyrosine. Position 128 is a phosphoserine (serine 128). The SH2 domain occupies 589-686; that stretch reads WNDGAILGFV…EVYSKYYTPV (98 aa). Phosphotyrosine occurs at positions 682 and 699.

This sequence belongs to the transcription factor STAT family. In terms of assembly, upon activation, forms a homodimer or a heterodimer with a related family member. Binds NR3C1. Interacts with NCOA1. Interacts with SOCS7. Interacts (via SH2 domain) with INSR. Interacts with CPEB3; this inhibits STAT5B-mediated transcriptional activation. Tyrosine phosphorylated in response to signaling via activated KIT, resulting in translocation to the nucleus. Tyrosine phosphorylated in response to signaling via activated FLT3; wild-type FLT3 results in much weaker phosphorylation than constitutively activated mutant FLT3. Alternatively, can be phosphorylated by JAK2. Phosphorylation at Tyr-699 by PTK6 or HCK leads to an increase of its transcriptional activity. In terms of tissue distribution, in the virgin, found in most tissues. Particularly abundant in muscle tissue of virgin and lactating females, and of males.

It localises to the cytoplasm. It is found in the nucleus. Functionally, carries out a dual function: signal transduction and activation of transcription. Mediates cellular responses to the cytokine KITLG/SCF and other growth factors. Binds to the GAS element and activates PRL-induced transcription. Positively regulates hematopoietic/erythroid differentiation. This is Signal transducer and activator of transcription 5B (Stat5b) from Mus musculus (Mouse).